Reading from the N-terminus, the 432-residue chain is Asparagine--tRNA ligase (432 aa).

The protein belongs to the class-II aminoacyl-tRNA synthetase family. Homodimer.

Its subcellular location is the cytoplasm. It catalyses the reaction tRNA(Asn) + L-asparagine + ATP = L-asparaginyl-tRNA(Asn) + AMP + diphosphate + H(+). This Lactobacillus helveticus (strain DPC 4571) protein is Asparagine--tRNA ligase.